A 470-amino-acid chain; its full sequence is MATFMTEDFLLKNDIARTLYHKYAAPMPIYDFHCHLSPQEIADDRRFDNLGQIWLEGDHYKWRALRSAGVDESLITGKETSDYEKYMAWANTVPKTLGNPLYHWTHLELRRPFGITGTLFGPDTAESIWTQCNEKLATPAFSARGIMQQMNVRMVGTTDDPIDSLEYHRQIAADDSIDIEVAPSWRPDKVFKIELDGFVDYLRKLEAAADVSITRFDDLRQALTRRLDHFAACGCRASDHGIETLRFAPVPDDAQLDAILGKRLAGETLSELEIAQFTTAVLVWLGRQYAARGWVMQLHIGAIRNNNTRMFRLLGPDTGFDSIGDNNISWALSRLLDSMDVTNELPKTILYCLNPRDNEVLATMIGNFQGPGIAGKVQFGSGWWFNDQKDGMLRQLEQLSQMGLLSQFVGMLTDSRSFLSYTRHEYFRRILCNLLGQWAQDGEIPDDEAMLSRMVQDICFNNAQRYFTIK.

It belongs to the metallo-dependent hydrolases superfamily. Uronate isomerase family.

It carries out the reaction D-glucuronate = D-fructuronate. The enzyme catalyses aldehydo-D-galacturonate = keto-D-tagaturonate. The protein operates within carbohydrate metabolism; pentose and glucuronate interconversion. This is Uronate isomerase from Salmonella agona (strain SL483).